Reading from the N-terminus, the 200-residue chain is Nucleoplasmin (200 aa).

At alanine 2 the chain carries N-acetylalanine. Phosphoserine is present on serine 3. At threonine 4 the chain carries Phosphothreonine. Serine 6 is subject to Phosphoserine. Residue threonine 8 is modified to Phosphothreonine. The segment at glutamate 35–glutamate 39 is acidic tract A1. Positions aspartate 123–glutamate 148 are enriched in acidic residues. Positions aspartate 123–lysine 200 are disordered. Positions glutamate 128 to glutamate 148 are acidic tract A2. Serine 149 is subject to Phosphoserine. The segment covering alanine 153–lysine 170 has biased composition (basic residues). The Bipartite nuclear localization signal motif lies at lysine 155 to lysine 170. The interval glutamate 174–glutamate 176 is acidic tract A3. Phosphoserine occurs at positions 177, 178, and 182. Residues lysine 185–lysine 200 show a composition bias toward basic residues. Omega-N-methylarginine; by PRMT5; alternate is present on arginine 192. Position 192 is a symmetric dimethylarginine; by PRMT5; alternate (arginine 192).

Belongs to the nucleoplasmin family. In terms of assembly, homopentamer, when bound to H2A-H2B dimers only. Homodecamer of two stacked pentamers, when bound to H2A-H2B dimers and H3-H4 tetramers simultaneously. Interacts with the heterotetramer formed by wdr77 and prmt5. In terms of processing, activated by phosphorylation of multiple serine/threonine residues, along both core and tail domains. The level of phosphorylation gradually increases during egg maturation, reaching an average of 7-10 phosphates per monomer, so that at the time of fertilization the activity of the protein is maximum. Methylated by prmt5, yielding both monomethylated and symmetrically dimethylated Arg-192.

The protein resides in the nucleus. Acts as a chaperone for histones, such as histone H2A-H2B, and thus regulates the assembly of nucleosome cores. Involved in chromatin remodeling, especially during fertilization and early embryonic development. May be involved in sperm chromatin decondensation during fertilization. The chain is Nucleoplasmin from Xenopus laevis (African clawed frog).